The primary structure comprises 455 residues: N(5)-hydroxyornithine:cis-anhydromevalonyl coenzyme A-N(5)-transacylase SIDF (455 aa).

A PTS1-type peroxisomal targeting signal motif is present at residues 453–455; the sequence is PKL.

This sequence belongs to the lysine N-acyltransferase mbtK family.

The protein resides in the peroxisome. The protein operates within siderophore biosynthesis. Hydroxyornithine transacylase; part of the gene cluster that mediates the biosynthesis of at least 11 siderophores, including beauverichelin A, dimerumic acid (DA), Na-dimethyl coprogen (NADC), eleutherazine B, ferricrocin (FC), fusarinine A, fusarinine C (FsC), metachelin A, mevalonolactone, rhodotorulic acid (RA) and tenellin. This cocktail of siderophores for iron metabolism is essential for virulence, and more specifically for the fungal virulence in penetrating through the host cuticle. Siderophore synthesis is also involved in conidial germination under iron-deficient conditions. For biosynthesis of fusarinine C, the transacylase SIDF transfers anhydromevalonyl to N(5)-hydroxyornithine. The required anhydromevalonyl-CoA moiety is derived from mevalonate by CoA ligation and dehydration catalyzed by SIDI and sidH respectively. This chain is N(5)-hydroxyornithine:cis-anhydromevalonyl coenzyme A-N(5)-transacylase SIDF, found in Beauveria bassiana (strain ARSEF 2860) (White muscardine disease fungus).